We begin with the raw amino-acid sequence, 248 residues long: Small ribosomal subunit protein uS2 (248 aa).

Belongs to the universal ribosomal protein uS2 family.

This Dechloromonas aromatica (strain RCB) protein is Small ribosomal subunit protein uS2.